We begin with the raw amino-acid sequence, 548 residues long: MATKLIKHGSKAREQMLEGIDVLADAVKVTLGPKGRNVLIEQSFGSPKITKDGVTVAKSIELKDKIRNAGAQLLKSAATKAAEVAGDGTTTATVLARALAREGNKLVAAGYNPMDLKRGMDLAVNAVVEEIKKSSKKINSQEEIAQVGTISSNGDKEIGEKIAKAMEEVGKEGVITVEEAKNFSFDVEVVKGMMFDRGYLSPYFVTNSEKMVAELENPFILLFEKKLSNLQPMLPILEAVVQSQRPLLIIAEDVEGEALATLVVNRLRGGLKVAAVKAPGFGDRRKAMMEDIAILTKGELITEDLGMKLENVSIKSLGTAKRVTVSKENTVIVDGSGDKKNIEDRVLQIKSQIAETTSDYDKEKLQERLAKLSGGVAVLKVGGATEVEVKERKDRVEDALAATRAAVEEGVVAGGGVTLLHASQTLTKLKVENKDQQAGIEIVIEALKDPLKQIIENAGENGGVVVGKLLEHNDKNYGFNAQDMQYVDMIKAGIIDPAKVVRTALQDAASVASLIITTETLIVDEPSDKEDAMPPMRGGMGGMGGMDF.

ATP-binding positions include 30–33, lysine 51, 87–91, glycine 415, and aspartate 496; these read TLGP and DGTTT. The segment at 527 to 548 is disordered; that stretch reads SDKEDAMPPMRGGMGGMGGMDF. Gly residues predominate over residues 538–548; that stretch reads GGMGGMGGMDF.

It belongs to the chaperonin (HSP60) family. As to quaternary structure, forms a cylinder of 14 subunits composed of two heptameric rings stacked back-to-back. Interacts with the co-chaperonin GroES.

Its subcellular location is the cytoplasm. The catalysed reaction is ATP + H2O + a folded polypeptide = ADP + phosphate + an unfolded polypeptide.. Its function is as follows. Together with its co-chaperonin GroES, plays an essential role in assisting protein folding. The GroEL-GroES system forms a nano-cage that allows encapsulation of the non-native substrate proteins and provides a physical environment optimized to promote and accelerate protein folding. This chain is Chaperonin GroEL, found in Rickettsia akari (strain Hartford).